Here is a 283-residue protein sequence, read N- to C-terminus: Phosphatidylglycerol--prolipoprotein diacylglyceryl transferase (283 aa).

Helical transmembrane passes span 21 to 41 (LAVR…LWLA), 60 to 80 (LLFA…VLFY), 95 to 115 (VWTG…AMLW), 124 to 144 (FFTI…AGRL), 176 to 196 (SQLY…NWFI), 203 to 223 (GAVS…VEYV), and 239 to 259 (MGQI…LWAF). Arg143 serves as a coordination point for a 1,2-diacyl-sn-glycero-3-phospho-(1'-sn-glycerol).

Belongs to the Lgt family.

It localises to the cell inner membrane. It catalyses the reaction L-cysteinyl-[prolipoprotein] + a 1,2-diacyl-sn-glycero-3-phospho-(1'-sn-glycerol) = an S-1,2-diacyl-sn-glyceryl-L-cysteinyl-[prolipoprotein] + sn-glycerol 1-phosphate + H(+). It participates in protein modification; lipoprotein biosynthesis (diacylglyceryl transfer). In terms of biological role, catalyzes the transfer of the diacylglyceryl group from phosphatidylglycerol to the sulfhydryl group of the N-terminal cysteine of a prolipoprotein, the first step in the formation of mature lipoproteins. The chain is Phosphatidylglycerol--prolipoprotein diacylglyceryl transferase from Aliivibrio fischeri (strain MJ11) (Vibrio fischeri).